The chain runs to 339 residues: Glycerol-3-phosphate dehydrogenase [NAD(P)+] (339 aa).

Residues S13, W14, and K108 each coordinate NADPH. The sn-glycerol 3-phosphate site is built by K108, G139, and S141. Residue A143 participates in NADPH binding. Sn-glycerol 3-phosphate-binding residues include K194, D247, S257, R258, and N259. The active-site Proton acceptor is K194. R258 contacts NADPH. V282 and E284 together coordinate NADPH.

This sequence belongs to the NAD-dependent glycerol-3-phosphate dehydrogenase family.

It localises to the cytoplasm. It catalyses the reaction sn-glycerol 3-phosphate + NAD(+) = dihydroxyacetone phosphate + NADH + H(+). The catalysed reaction is sn-glycerol 3-phosphate + NADP(+) = dihydroxyacetone phosphate + NADPH + H(+). The protein operates within membrane lipid metabolism; glycerophospholipid metabolism. Catalyzes the reduction of the glycolytic intermediate dihydroxyacetone phosphate (DHAP) to sn-glycerol 3-phosphate (G3P), the key precursor for phospholipid synthesis. The sequence is that of Glycerol-3-phosphate dehydrogenase [NAD(P)+] from Streptococcus mutans serotype c (strain ATCC 700610 / UA159).